We begin with the raw amino-acid sequence, 448 residues long: Portal protein (448 aa).

The interval 1-25 (MAKRGRKPKELVPGPGSIDPSDVPK) is disordered.

This sequence belongs to the P23virus portal protein family. As to quaternary structure, homododecamer. Interacts with the capsid protein. Interacts with the terminase large subunit; this interaction allows the packaging of viral DNA.

It localises to the virion. Forms the portal vertex of the capsid. This portal plays critical roles in head assembly, genome packaging, neck/tail attachment, and genome ejection. The portal protein multimerizes as a single ring-shaped homododecamer arranged around a central channel. Forms the portal vertex of the capsid. This portal plays critical roles in head assembly, genome packaging, neck/tail attachment, and genome ejection. In Thermus thermophilus (Thermus thermophilus phage P23-45), this protein is Portal protein.